The following is a 728-amino-acid chain: Catalase-peroxidase 1 (728 aa).

Positions 91-218 (WHSAGTYRIA…LAAVQMGLIY (128 aa)) form a cross-link, tryptophyl-tyrosyl-methioninium (Trp-Tyr) (with M-244). His92 functions as the Proton acceptor in the catalytic mechanism. The segment at residues 218–244 (YVNPEGPDGNPDPVAAARDIRDTFARM) is a cross-link (tryptophyl-tyrosyl-methioninium (Tyr-Met) (with W-91)). His259 contacts heme b.

Belongs to the peroxidase family. Peroxidase/catalase subfamily. Homodimer or homotetramer. It depends on heme b as a cofactor. Post-translationally, formation of the three residue Trp-Tyr-Met cross-link is important for the catalase, but not the peroxidase activity of the enzyme.

The catalysed reaction is H2O2 + AH2 = A + 2 H2O. It catalyses the reaction 2 H2O2 = O2 + 2 H2O. In terms of biological role, bifunctional enzyme with both catalase and broad-spectrum peroxidase activity. The chain is Catalase-peroxidase 1 from Burkholderia ambifaria (strain ATCC BAA-244 / DSM 16087 / CCUG 44356 / LMG 19182 / AMMD) (Burkholderia cepacia (strain AMMD)).